The sequence spans 190 residues: Imidazoleglycerol-phosphate dehydratase (190 aa).

Belongs to the imidazoleglycerol-phosphate dehydratase family.

It is found in the cytoplasm. It carries out the reaction D-erythro-1-(imidazol-4-yl)glycerol 3-phosphate = 3-(imidazol-4-yl)-2-oxopropyl phosphate + H2O. It functions in the pathway amino-acid biosynthesis; L-histidine biosynthesis; L-histidine from 5-phospho-alpha-D-ribose 1-diphosphate: step 6/9. This Sulfurovum sp. (strain NBC37-1) protein is Imidazoleglycerol-phosphate dehydratase.